Consider the following 177-residue polypeptide: Ecotin (177 aa).

The N-terminal stretch at 1–23 (MQASIQNRIFFGLVVLWSTTVLE) is a signal peptide. Residues C83 and C122 are joined by a disulfide bond.

It belongs to the protease inhibitor I11 (ecotin) family. As to quaternary structure, homodimer.

The protein resides in the periplasm. Its function is as follows. General inhibitor of family S1 serine proteases. In Prochlorococcus marinus (strain MIT 9313), this protein is Ecotin.